The following is a 105-amino-acid chain: NADH-quinone oxidoreductase subunit K (105 aa).

The next 3 helical transmembrane spans lie at 8-28, 33-53, and 65-85; these read VTNGLIFSTLLFVISVAGIII, ILILLMSIELMLLAVNTNFLI, and VFVFFIMAVAAAETAIGLAIV.

This sequence belongs to the complex I subunit 4L family. As to quaternary structure, NDH-1 is composed of 14 different subunits. Subunits NuoA, H, J, K, L, M, N constitute the membrane sector of the complex.

The protein localises to the cell inner membrane. The catalysed reaction is a quinone + NADH + 5 H(+)(in) = a quinol + NAD(+) + 4 H(+)(out). Its function is as follows. NDH-1 shuttles electrons from NADH, via FMN and iron-sulfur (Fe-S) centers, to quinones in the respiratory chain. The immediate electron acceptor for the enzyme in this species is believed to be ubiquinone. Couples the redox reaction to proton translocation (for every two electrons transferred, four hydrogen ions are translocated across the cytoplasmic membrane), and thus conserves the redox energy in a proton gradient. The protein is NADH-quinone oxidoreductase subunit K of Francisella philomiragia subsp. philomiragia (strain ATCC 25017 / CCUG 19701 / FSC 153 / O#319-036).